A 290-amino-acid polypeptide reads, in one-letter code: Bifunctional protein FolD (290 aa).

NADP(+) contacts are provided by residues G167–S169, S192, and I233.

Belongs to the tetrahydrofolate dehydrogenase/cyclohydrolase family. Homodimer.

It carries out the reaction (6R)-5,10-methylene-5,6,7,8-tetrahydrofolate + NADP(+) = (6R)-5,10-methenyltetrahydrofolate + NADPH. The catalysed reaction is (6R)-5,10-methenyltetrahydrofolate + H2O = (6R)-10-formyltetrahydrofolate + H(+). The protein operates within one-carbon metabolism; tetrahydrofolate interconversion. Its function is as follows. Catalyzes the oxidation of 5,10-methylenetetrahydrofolate to 5,10-methenyltetrahydrofolate and then the hydrolysis of 5,10-methenyltetrahydrofolate to 10-formyltetrahydrofolate. In Gloeobacter violaceus (strain ATCC 29082 / PCC 7421), this protein is Bifunctional protein FolD.